The following is a 3011-amino-acid chain: Genome polyprotein (3011 aa).

At serine 2 the chain carries N-acetylserine; by host. The segment at 2–23 is interaction with STAT1; the sequence is STNPKPQRKTKRNTNRRPQDVK. The interval 2-58 is interaction with EIF2AK2/PKR; sequence STNPKPQRKTKRNTNRRPQDVKFPGGGQIVGGVYLLPRRGPRVGVRATRKTSERSQP. Residues 2–59 are interaction with DDX3X; it reads STNPKPQRKTKRNTNRRPQDVKFPGGGQIVGGVYLLPRRGPRVGVRATRKTSERSQPR. The segment at 2–75 is disordered; that stretch reads STNPKPQRKT…PKARRPEGRS (74 aa). Residues 2–168 lie on the Cytoplasmic side of the membrane; sequence STNPKPQRKT…EDGVNYATGN (167 aa). 2 consecutive short sequence motifs (nuclear localization signal) follow at residues 5 to 13 and 38 to 43; these read PKPQRKTKR and PRRGPR. The span at 7 to 16 shows a compositional bias: basic residues; that stretch reads PQRKTKRNTN. Serine 53 carries the post-translational modification Phosphoserine; by host. Short sequence motifs (nuclear localization signal) lie at residues 58–64 and 66–71; these read PRGRRQP and PKARRP. A compositionally biased stretch (basic residues) spans 58-68; sequence PRGRRQPIPKA. A Phosphoserine; by host modification is found at serine 99. The tract at residues 112–152 is important for endoplasmic reticulum and mitochondrial localization; it reads PRRRSRNLGKVIDTLTCGFADLMGYIPLVGAPLGGAARALA. Serine 116 carries the phosphoserine; by host PKA modification. An interaction with APOA2 region spans residues 122–173; that stretch reads VIDTLTCGFADLMGYIPLVGAPLGGAARALAHGVRVLEDGVNYATGNLPGCS. An important for lipid droplets localization region spans residues 164–167; the sequence is YATG. A helical membrane pass occupies residues 169–189; sequence LPGCSFSIFLLALLSCLTVPA. The propeptide at 178–191 is ER anchor for the core protein, removed in mature form by host signal peptidase; that stretch reads LLALLSCLTVPASA. Residues 190–358 are Lumenal-facing; sequence SAVGVRNSSG…AGAHWGVLAG (169 aa). Asparagine 196, asparagine 209, and asparagine 234 each carry an N-linked (GlcNAc...) asparagine; by host glycan. The segment at 265–296 is important for fusion; the sequence is IVGAAAFCSAMYVGDLCGSIFLVGQIFTFSPR. An N-linked (GlcNAc...) asparagine; by host glycan is attached at asparagine 305. A helical transmembrane segment spans residues 359 to 379; that stretch reads LAYYSMVGNWAKVVVVLLLFA. The Lumenal portion of the chain corresponds to 380–725; the sequence is GVDAETRVTG…WEYVVLLFLL (346 aa). The segment at 385 to 411 is HVR1; that stretch reads TRVTGGAAGHTAFGFASFLAPGAKQKI. Asparagine 417, asparagine 423, asparagine 430, and asparagine 448 each carry an N-linked (GlcNAc...) (high mannose) asparagine; by host glycan. 4 disulfide bridges follow: cysteine 429/cysteine 552, cysteine 452/cysteine 459, cysteine 486/cysteine 494, and cysteine 503/cysteine 508. The interval 474 to 479 is HVR2; that stretch reads HEGNAS. A CD81-binding 1 region spans residues 480–493; the sequence is DDQRPYCWHYALRP. Residue asparagine 532 is glycosylated (N-linked (GlcNAc...) (high mannose) asparagine; by host). Asparagine 540 carries an N-linked (GlcNAc...) asparagine; by host glycan. A CD81-binding 2 region spans residues 544 to 551; it reads PPMGNWFG. The N-linked (GlcNAc...) (high mannose) asparagine; by host glycan is linked to asparagine 556. Cysteine 564 and cysteine 569 are oxidised to a cystine. N-linked (GlcNAc...) (high mannose) asparagine; by host glycosylation occurs at asparagine 576. Intrachain disulfides connect cysteine 581–cysteine 585, cysteine 597–cysteine 620, and cysteine 607–cysteine 644. N-linked (GlcNAc...) (high mannose) asparagine; by host glycosylation is found at asparagine 623 and asparagine 645. A disulfide bridge links cysteine 652 with cysteine 677. Residues 660–671 are PKR/eIF2-alpha phosphorylation homology domain (PePHD); it reads AELSPLLLSTTQ. Residues 726 to 746 traverse the membrane as a helical segment; it reads LADARICACLWMMLLISQVEA. Residues 747–757 lie on the Lumenal side of the membrane; it reads ALENLIVLNAA. Residues 758–778 form a helical membrane-spanning segment; sequence SLVGTHGIVPFFIFFCAAWYL. The Cytoplasmic portion of the chain corresponds to 779–781; sequence KGK. The chain crosses the membrane as a helical span at residues 782–803; sequence WAPGLAYSVYGMWPLLLLLLAL. Over 804 to 813 the chain is Lumenal; the sequence is PQRAYALDQE. The helical transmembrane segment at 814 to 834 threads the bilayer; it reads LAASCGATVFICLAVLTLSPY. The Cytoplasmic portion of the chain corresponds to 835-838; that stretch reads YKQY. The chain crosses the membrane as a helical span at residues 839 to 859; sequence MARGIWWLQYMLTRAEALLQV. Residues 860 to 881 are Lumenal-facing; that stretch reads WVPPLNARGGRDGVVLLTCVLH. The chain crosses the membrane as a helical span at residues 882–902; sequence PHLLFEITKIMLAILGPLWIL. The Peptidase C18 domain occupies 903-1026; that stretch reads QASLLKVPYF…ALTDKGWRLL (124 aa). The Cytoplasmic segment spans residues 903–1657; sequence QASLLKVPYF…CMSADLEVVT (755 aa). The segment at 904-1206 is protease NS2-3; sequence ASLLKVPYFV…PVESLETTMR (303 aa). Residue cysteine 922 is the site of S-palmitoyl cysteine; by host attachment. The interaction with host SCPS1 stretch occupies residues 929 to 949; it reads AGGQYVQMALLKLGAFAGTYI. Catalysis depends on for protease NS2 activity; shared with dimeric partner residues histidine 952, glutamate 972, and cysteine 993. In terms of domain architecture, Peptidase S29 spans 1027–1208; the sequence is APITAYAQQT…ESLETTMRSP (182 aa). Residues histidine 1083 and aspartate 1107 each act as charge relay system; for serine protease NS3 activity in the active site. Zn(2+)-binding residues include cysteine 1123 and cysteine 1125. Serine 1165 acts as the Charge relay system; for serine protease NS3 activity in catalysis. 2 residues coordinate Zn(2+): cysteine 1171 and histidine 1175. Residues 1217–1369 form the Helicase ATP-binding domain; that stretch reads PTVPQSYQVA…SNIEEVALST (153 aa). ATP is bound at residue 1230 to 1237; the sequence is APTGSGKS. 2 residues coordinate Mg(2+): serine 1237 and glutamate 1317. The short motif at 1316 to 1319 is the DECH box element; the sequence is DECH. The tract at residues 1486–1497 is RNA-binding; the sequence is QRRGRTGRGKHG. The helical transmembrane segment at 1658–1678 threads the bilayer; the sequence is STWVLVGGVLAALAAYCLSTG. The segment at 1679-1690 is NS3-binding; that stretch reads SVVIVGRIILSG. The Cytoplasmic segment spans residues 1679 to 1805; the sequence is SVVIVGRIIL…AVTSPLTTQQ (127 aa). Residues 1806 to 1824 traverse the membrane as a helical segment; the sequence is TLLFNILGGWVAAQLAAPA. Over 1825–1828 the chain is Lumenal; it reads AATA. A helical transmembrane segment spans residues 1829-1849; it reads FVGAGITGAVIGSVGLGKVLV. Residue aspartate 1850 is a topological domain, cytoplasmic. The helical transmembrane segment at 1851–1871 threads the bilayer; the sequence is ILAGYGAGVAGALVAFKIMSG. Topologically, residues 1872–1881 are lumenal; it reads EAPTAEDLVN. A helical membrane pass occupies residues 1882-1902; the sequence is LLPAILSPGALVVGVVCAAIL. Residues 1903 to 1972 are Cytoplasmic-facing; it reads RRHVGPGEGA…WISSDCTAPC (70 aa). S-palmitoyl cysteine; by host attachment occurs at residues cysteine 1968 and cysteine 1972. The stretch at 1973-2002 is an intramembrane region; sequence AGSWLKDVWDWICEVLSDFKSWLKAKLMPQ. Over 2003–2990 the chain is Cytoplasmic; that stretch reads LPGIPFVSCQ…YHSVSHVRPR (988 aa). Residues cysteine 2011, cysteine 2029, cysteine 2031, and cysteine 2052 each contribute to the Zn(2+) site. The interval 2120–2208 is FKBP8-binding; it reads EFFTEVDGVR…ASSSASQLSA (89 aa). The segment at 2120-2332 is transcriptional activation; sequence EFFTEVDGVR…PVPPPRRKRT (213 aa). The tract at residues 2135–2139 is interaction with non-structural protein 4A; that stretch reads PPCKP. Residues 2189 to 2441 form an interaction with host SKP2 region; sequence RLNRGSPPSL…TPCAAEETKL (253 aa). Serine 2194 carries the post-translational modification Phosphoserine; by host; in p56. Serine 2197, serine 2201, serine 2204, serine 2207, and serine 2210 each carry phosphoserine; by host; in p58. The ISDR stretch occupies residues 2210–2249; the sequence is SLKATCTTHHDSPDADLITANLLWRQEMGGNITRVESENK. The segment at 2210–2275 is interaction with EIF2AK2/PKR; that stretch reads SLKATCTTHH…REISVPAEIL (66 aa). The tract at residues 2249 to 2306 is NS4B-binding; sequence KIVILDSFDPLVAEEDDREISVPAEILLKSKKFPPAMPIWARPDYNPPLVEPWKRPDY. The SH3-binding motif lies at 2322–2325; the sequence is TPVP. A Nuclear localization signal motif is present at residues 2326–2334; it reads PPRRKRTVV. A Glycyl lysine isopeptide (Lys-Gly) (interchain with G-Cter in ubiquitin) cross-link involves residue lysine 2350. The segment covering 2352 to 2373 has biased composition (low complexity); that stretch reads FGSSTTSGVTSGEAAESSPAPS. Positions 2352–2409 are disordered; it reads FGSSTTSGVTSGEAAESSPAPSCDGELDSEAESYSSMPPLEGEPGDPDLSDGSWSTVS. Positions 2354–2377 are V3; the sequence is SSTTSGVTSGEAAESSPAPSCDGE. Residues serine 2449 and serine 2462 each carry the phosphoserine; by host modification. The RdRp catalytic domain occupies 2634-2752; that stretch reads PMGFSYDTRC…ICESAGVQED (119 aa). 3 residues coordinate Mg(2+): aspartate 2640, aspartate 2738, and aspartate 2739. The helical transmembrane segment at 2991-3011 threads the bilayer; the sequence is WFFWCLLLLSVGVGIYLLPNR.

It belongs to the hepacivirus polyprotein family. In terms of assembly, homooligomer. Interacts with E1 (via C-terminus). Interacts with the non-structural protein 5A. Interacts (via N-terminus) with host STAT1 (via SH2 domain); this interaction results in decreased STAT1 phosphorylation and ubiquitin-mediated proteasome-dependent STAT1 degradation, leading to decreased IFN-stimulated gene transcription. Interacts with host STAT3; this interaction constitutively activates STAT3. Interacts with host LTBR receptor. Interacts with host TNFRSF1A receptor and possibly induces apoptosis. Interacts with host HNRPK. Interacts with host YWHAE. Interacts with host UBE3A/E6AP. Interacts with host DDX3X. Interacts with host APOA2. Interacts with host RXRA protein. Interacts with host SP110 isoform 3/Sp110b; this interaction sequesters the transcriptional corepressor SP110 away from the nucleus. Interacts with host CREB3 nuclear transcription protein; this interaction triggers cell transformation. Interacts with host ACY3. Interacts with host C1QR1. Interacts with host RBM24; this interaction, which enhances the interaction of the mature core protein with 5'-UTR, may inhibit viral translation and favor replication. Interacts with host EIF2AK2/PKR; this interaction induces the autophosphorylation of EIF2AK2. Part of the viral assembly initiation complex composed of NS2, E1, E2, NS3, NS4A, NS5A and the mature core protein. Forms a heterodimer with envelope glycoprotein E2. Interacts with mature core protein. Interacts with protease NS2. The heterodimer E1/E2 interacts with host CLDN1; this interaction plays a role in viral entry into host cell. Interacts with host SPSB2 (via C-terminus). Part of the viral assembly initiation complex composed of NS2, E1, E2, NS3, NS4A, NS5A and the mature core protein. Interacts with host NEURL3; this interaction prevents E1 binding to glycoprotein E2. As to quaternary structure, forms a heterodimer with envelope glycoprotein E1. Interacts with host CD81 and SCARB1 receptors; these interactions play a role in viral entry into host cell. Interacts with host EIF2AK2/PKR; this interaction inhibits EIF2AK2 and probably allows the virus to evade the innate immune response. Interacts with host CD209/DC-SIGN and CLEC4M/DC-SIGNR. Interact with host SPCS1; this interaction is essential for viral particle assembly. Interacts with protease NS2. The heterodimer E1/E2 interacts with host CLDN1; this interaction plays a role in viral entry into host cell. Part of the viral assembly initiation complex composed of NS2, E1, E2, NS3, NS4A, NS5A and the mature core protein. Interacts with host SLC3A2/4F2hc; the interaction may facilitate viral entry into host cell. Interacts with human PLSCR1. In terms of assembly, homohexamer. Homoheptamer. Interacts with protease NS2. Homodimer. Interacts with host SPCS1; this interaction is essential for viral particle assembly. Interacts with envelope glycoprotein E1. Interacts with envelope glycoprotein E2. Interacts with viroporin p7. Interacts with serine protease/helicase NS3. Part of the replication complex composed of NS2, NS3, NS4A, NS4B, NS5A and the RNA-directed RNA polymerase embedded in an ER-derived membranous web. Part of the viral assembly initiation complex composed of NS2, E1, E2, NS3, NS4A, NS5A and the mature core protein. As to quaternary structure, interacts with protease NS2. Interacts with non-structural protein 4A; this interaction stabilizes the folding of NS3 serine protease. NS3-NS4A interaction is essential for NS3 activation and allows membrane anchorage of the latter. NS3/NS4A complex also prevents phosphorylation of host IRF3, thus preventing the establishment of dsRNA induced antiviral state. Interacts with host MAVS; this interaction leads to the cleavage and inhibition of host MAVS. Interacts with host TICAM1; this interaction leads to the cleavage and inhibition of host TICAM1. Interacts with host TANK-binding kinase/TBK1; this interaction results in the inhibition of the association between TBK1 and IRF3, which leads to the inhibition of IRF3 activation. Interacts with host RBM24. Part of the replication complex composed of NS2, NS3, NS4A, NS4B, NS5A and the RNA-directed RNA polymerase embedded in an ER-derived membranous web. Part of the viral assembly initiation complex composed of NS2, E1, E2, NS3, NS4A, NS5A and the mature core protein. In terms of assembly, interacts with NS3 serine protease; this interaction stabilizes the folding of NS3 serine protease. NS3-NS4A interaction is essential for NS3 activation and allows membrane anchorage of the latter. Interacts with non-structural protein 5A (via N-terminus). Part of the replication complex composed of NS2, NS3, NS4A, NS4B, NS5A and the RNA-directed RNA polymerase embedded in an ER-derived membranous web. Part of the viral assembly initiation complex composed of NS2, E1, E2, NS3, NS4A, NS5A and the mature core protein. Homomultimer. Interacts with non-structural protein NS5A. Interacts with host PLA2G4C; this interaction likely initiates the recruitment of replication complexes to lipid droplets. Interacts with host STING; this interaction disrupts the interaction between STING and TBK1 thereby suppressing the interferon signaling. Part of the replication complex composed of NS2, NS3, NS4A, NS4B, NS5A and the RNA-directed RNA polymerase embedded in an ER-derived membranous web. As to quaternary structure, monomer. Homodimer; dimerization is required for RNA-binding. Interacts with the mature core protein. Interacts (via N-terminus) with non-structural protein 4A. Interacts with non-structural protein 4B. Interacts (via region D2) with RNA-directed RNA polymerase. Part of the viral assembly initiation complex composed of NS2, E1, E2, NS3, NS4A, NS5A and the mature core protein. Part of the replication complex composed of NS2, NS3, NS4A, NS4B, NS5A and the RNA-directed RNA polymerase embedded in an ER-derived membranous web. Interacts with host GRB2. Interacts with host BIN1. Interacts with host PIK3R1. Interacts with host SRCAP. Interacts with host FKBP8. Interacts (via C-terminus) with host VAPB (via MSP domain). Interacts with host EIF2AK2/PKR; this interaction leads to disruption of EIF2AK2 dimerization by NS5A and probably allows the virus to evade the innate immune response. Interacts (via N-terminus) with host PACSIN2 (via N-terminus); this interaction attenuates protein kinase C alpha-mediated phosphorylation of PACSIN2 by disrupting the interaction between PACSIN2 and PRKCA. Interacts (via N-terminus) with host SRC kinase (via SH2 domain). Interacts with most Src-family kinases. Interacts with host IFI27 and SKP2; promotes the ubiquitin-mediated proteasomal degradation of NS5A. Interacts with host GPS2. Interacts with host TNFRSF21; this interaction allows the modulation by the virus of JNK, p38 MAPK, STAT3, and Akt signaling pathways in a DR6-dependent manner. Interacts (via N-terminus) with host CIDEB (via N-terminus); this interaction seems to regulate the association of HCV particles with APOE. Interacts with host CHKA/Choline Kinase-alpha; CHKA bridges host PI4KA and NS5A and potentiates NS5A-stimulated PI4KA activity, which then facilitates the targeting of the ternary complex to the ER for viral replication. Interacts with host SPSB2 (via C-terminus); this interaction targets NS5A for ubiquitination and degradation. Interacts with host RAB18; this interaction may promote the association of NS5A and other replicase components with lipid droplets. Interacts (via region D2) with host PPIA/CYPA; the interaction stimulates RNA-binding ability of NS5A and is dependent on the peptidyl-prolyl cis-trans isomerase activity of PPIA/CYPA. Interacts with host TRIM14; this interaction induces the degradation of NS5A. In terms of assembly, homooligomer. Interacts with non-structural protein 5A. Interacts with host VAPB. Interacts with host PRK2/PKN2. Interacts with host HNRNPA1 and SEPT6; these interactions facilitate viral replication. Part of the replication complex composed of NS2, NS3, NS4A, NS4B, NS5A and the RNA-directed RNA polymerase. Requires Zn(2+) as cofactor. The cofactor is Mg(2+). Specific enzymatic cleavages in vivo yield mature proteins. The structural proteins, core, E1, E2 and p7 are produced by proteolytic processing by host signal peptidases. The core protein precursor is synthesized as a 23 kDa, which is retained in the ER membrane through the hydrophobic signal peptide. Cleavage by the signal peptidase releases the 21 kDa mature core protein. The cleavage of the core protein precursor occurs between aminoacids 176 and 188 but the exact cleavage site is not known. Some degraded forms of the core protein appear as well during the course of infection. The other proteins (p7, NS2, NS3, NS4A, NS4B, NS5A and NS5B) are cleaved by the viral proteases. Autoprocessing between NS2 and NS3 is mediated by the NS2 cysteine protease catalytic domain and regulated by the NS3 N-terminal domain. Post-translationally, phosphorylated by host PKC and PKA. In terms of processing, ubiquitinated; mediated by UBE3A and leading to core protein subsequent proteasomal degradation. Highly N-glycosylated. Post-translationally, palmitoylation is required for NS2/3 autoprocessing and E2 recruitment to membranes. In terms of processing, palmitoylated. This modification may play a role in its polymerization or in protein-protein interactions. Phosphorylated on serines in a basal form termed p56. p58 is a hyperphosphorylated form of p56. p56 and p58 coexist in the cell in roughly equivalent amounts. Hyperphosphorylation is dependent on the presence of NS4A. Host CSNK1A1/CKI-alpha or RPS6KB1 kinases may be responsible for NS5A phosphorylation. Post-translationally, tyrosine phosphorylation is essential for the interaction with host SRC. In terms of processing, the N-terminus is phosphorylated by host PRK2/PKN2.

It localises to the host endoplasmic reticulum membrane. The protein localises to the host mitochondrion membrane. The protein resides in the virion. Its subcellular location is the host cytoplasm. It is found in the host nucleus. It localises to the host lipid droplet. The protein localises to the virion membrane. The protein resides in the host mitochondrion. Its subcellular location is the host cell membrane. It is found in the host perinuclear region. The catalysed reaction is Hydrolysis of four peptide bonds in the viral precursor polyprotein, commonly with Asp or Glu in the P6 position, Cys or Thr in P1 and Ser or Ala in P1'.. It carries out the reaction a ribonucleoside 5'-triphosphate + H2O = a ribonucleoside 5'-diphosphate + phosphate + H(+). It catalyses the reaction ATP + H2O = ADP + phosphate + H(+). The enzyme catalyses RNA(n) + a ribonucleoside 5'-triphosphate = RNA(n+1) + diphosphate. Its activity is regulated as follows. Inhibited by the antiviral drug hexamethylene amiloride. Inhibition by amantadine appears to be genotype-dependent. Also inhibited by long-alkyl-chain iminosugar derivatives. With respect to regulation, activity is up-regulated by PRK2/PKN2-mediated phosphorylation. Packages viral RNA to form a viral nucleocapsid, and promotes virion budding. Participates in the viral particle production as a result of its interaction with the non-structural protein 5A. Binds RNA and may function as a RNA chaperone to induce the RNA structural rearrangements taking place during virus replication. Modulates viral translation initiation by interacting with viral IRES and 40S ribosomal subunit. Affects various cell signaling pathways, host immunity and lipid metabolism. Prevents the establishment of cellular antiviral state by blocking the interferon-alpha/beta (IFN-alpha/beta) and IFN-gamma signaling pathways and by blocking the formation of phosphorylated STAT1 and promoting ubiquitin-mediated proteasome-dependent degradation of STAT1. Activates STAT3 leading to cellular transformation. Regulates the activity of cellular genes, including c-myc and c-fos. May repress the promoter of p53, and sequester CREB3 and SP110 isoform 3/Sp110b in the cytoplasm. Represses cell cycle negative regulating factor CDKN1A, thereby interrupting an important check point of normal cell cycle regulation. Targets transcription factors involved in the regulation of inflammatory responses and in the immune response: suppresses TNF-induced NF-kappa-B activation, and activates AP-1. Binds to dendritic cells (DCs) via C1QR1, resulting in down-regulation of T-lymphocytes proliferation. Alters lipid metabolism by interacting with hepatocellular proteins involved in lipid accumulation and storage. Induces up-regulation of FAS promoter activity, and thereby contributes to the increased triglyceride accumulation in hepatocytes (steatosis). Its function is as follows. Forms a heterodimer with envelope glycoprotein E2, which mediates virus attachment to the host cell, virion internalization through clathrin-dependent endocytosis and fusion with host membrane. Fusion with the host cell is most likely mediated by both E1 and E2, through conformational rearrangements of the heterodimer required for fusion rather than a classical class II fusion mechanism. E1/E2 heterodimer binds host apolipoproteins such as APOB and ApoE thereby forming a lipo-viro-particle (LVP). APOE associated to the LVP allows the initial virus attachment to cell surface receptors such as the heparan sulfate proteoglycans (HSPGs), syndecan-1 (SDC1), syndecan-1 (SDC2), the low-density lipoprotein receptor (LDLR) and scavenger receptor class B type I (SCARB1). The cholesterol transfer activity of SCARB1 allows E2 exposure and binding of E2 to SCARB1 and the tetraspanin CD81. E1/E2 heterodimer binding on CD81 activates the epithelial growth factor receptor (EGFR) signaling pathway. Diffusion of the complex E1-E2-EGFR-SCARB1-CD81 to the cell lateral membrane allows further interaction with Claudin 1 (CLDN1) and occludin (OCLN) to finally trigger HCV entry. In terms of biological role, forms a heterodimer with envelope glycoprotein E1, which mediates virus attachment to the host cell, virion internalization through clathrin-dependent endocytosis and fusion with host membrane. Fusion with the host cell is most likely mediated by both E1 and E2, through conformational rearrangements of the heterodimer required for fusion rather than a classical class II fusion mechanism. The interaction between envelope glycoprotein E2 and host apolipoprotein E/APOE allows the proper assembly, maturation and infectivity of the viral particles. This interaction is probably promoted via the up-regulation of cellular autophagy by the virus. E1/E2 heterodimer binds host apolipoproteins such as APOB and APOE thereby forming a lipo-viro-particle (LVP). APOE associated to the LVP allows the initial virus attachment to cell surface receptors such as the heparan sulfate proteoglycans (HSPGs), syndecan-1 (SDC1), syndecan-1 (SDC2), the low-density lipoprotein receptor (LDLR) and scavenger receptor class B type I (SCARB1). The cholesterol transfer activity of SCARB1 allows E2 exposure and binding of E2 to SCARB1 and the tetraspanin CD81. E1/E2 heterodimer binding on CD81 activates the epithelial growth factor receptor (EGFR) signaling pathway. Diffusion of the complex E1-E2-EGFR-SCARB1-CD81 to the cell lateral membrane allows further interaction with Claudin 1 (CLDN1) and occludin (OCLN) to finally trigger HCV entry. Inhibits host EIF2AK2/PKR activation, preventing the establishment of an antiviral state. Viral ligand for CD209/DC-SIGN and CLEC4M/DC-SIGNR, which are respectively found on dendritic cells (DCs), and on liver sinusoidal endothelial cells and macrophage-like cells of lymph node sinuses. These interactions allow the capture of circulating HCV particles by these cells and subsequent facilitated transmission to permissive cells such as hepatocytes and lymphocyte subpopulations. The interaction between E2 and host amino acid transporter complex formed by SLC3A2 and SLC7A5/LAT1 may facilitate viral entry into host cell. Functionally, ion channel protein that acts as a viroporin and plays an essential role in the assembly, envelopment and secretion of viral particles. Regulates the host cell secretory pathway, which induces the intracellular retention of viral glycoproteins and favors assembly of viral particles. Creates a pore in acidic organelles and releases Ca(2+) and H(+) in the cytoplasm of infected cells, leading to a productive viral infection. High levels of cytoplasmic Ca(2+) may trigger membrane trafficking and transport of viral ER-associated proteins to viroplasms, sites of viral genome replication. This ionic imbalance induces the assembly of the inflammasome complex, which triggers the maturation of pro-IL-1beta into IL-1beta through the action of caspase-1. Targets also host mitochondria and induces mitochondrial depolarization. In addition of its role as a viroporin, acts as a lipid raft adhesion factor. Cysteine protease required for the proteolytic auto-cleavage between the non-structural proteins NS2 and NS3. The N-terminus of NS3 is required for the function of NS2 protease (active region NS2-3). Promotes the initiation of viral particle assembly by mediating the interaction between structural and non-structural proteins. Its function is as follows. Displays three enzymatic activities: serine protease with a chymotrypsin-like fold, NTPase and RNA helicase. NS3 serine protease, in association with NS4A, is responsible for the cleavages of NS3-NS4A, NS4A-NS4B, NS4B-NS5A and NS5A-NS5B. The NS3/NS4A complex prevents phosphorylation of host IRF3, thus preventing the establishment of dsRNA induced antiviral state. The NS3/NS4A complex induces host amino acid transporter component SLC3A2, thus contributing to HCV propagation. NS3 RNA helicase binds to RNA and unwinds both dsDNA and dsRNA in the 3' to 5' direction, and likely resolves RNA complicated stable secondary structures in the template strand. Binds a single ATP and catalyzes the unzipping of a single base pair of dsRNA. Inhibits host antiviral proteins TBK1 and IRF3 thereby preventing the establishment of an antiviral state. Cleaves host MAVS/CARDIF thereby preventing the establishment of an antiviral state. Cleaves host TICAM1/TRIF, thereby disrupting TLR3 signaling and preventing the establishment of an antiviral state. In terms of biological role, induces a specific membrane alteration that serves as a scaffold for the virus replication complex. This membrane alteration gives rise to the so-called ER-derived membranous web that contains the replication complex. NS4B self-interaction contributes to its function in membranous web formation. Promotes host TRIF protein degradation in a CASP8-dependent manner thereby inhibiting host TLR3-mediated interferon signaling. Disrupts the interaction between STING and TBK1 contributing to the inhibition of interferon signaling. Functionally, phosphorylated protein that is indispensable for viral replication and assembly. Both hypo- and hyperphosphorylated states are required for the viral life cycle. The hyperphosphorylated form of NS5A is an inhibitor of viral replication. Involved in RNA-binding and especially in binding to the viral genome. Zinc is essential for RNA-binding. Participates in the viral particle production as a result of its interaction with the mature viral core protein. Its interaction with host VAPB may target the viral replication complex to vesicles. Down-regulates viral IRES translation initiation. Mediates interferon resistance, presumably by interacting with and inhibiting host EIF2AK2/PKR. Prevents BIN1-induced apoptosis. Acts as a transcriptional activator of some host genes important for viral replication when localized in the nucleus. Via the interaction with host PACSIN2, modulates lipid droplet formation in order to promote virion assembly. Modulates TNFRSF21/DR6 signaling pathway for viral propagation. RNA-dependent RNA polymerase that performs primer-template recognition and RNA synthesis during viral replication. Initiates RNA transcription/replication at a flavin adenine dinucleotide (FAD), resulting in a 5'- FAD cap on viral RNAs. In this way, recognition of viral 5' RNA by host pattern recognition receptors can be bypassed, thereby evading activation of antiviral pathways. The protein is Genome polyprotein of Homo sapiens (Human).